The following is a 78-amino-acid chain: Protein SlyX homolog (78 aa).

Belongs to the SlyX family.

The polypeptide is Protein SlyX homolog (Xanthomonas campestris pv. campestris (strain 8004)).